The chain runs to 383 residues: Heme A synthase (383 aa).

The next 8 helical transmembrane spans lie at 38–58 (VRVWLMMLFGLVVIMIAVGGL), 127–147 (VIGLVWALGFFGFLVTRKIPP), 153–173 (LFLLGVLGGLQGAIGWWMVAS), 187–207 (LATHLGLAFFILGLIAWYIMV), 230–250 (ANWLMGLAAVQILLGALVAGI), 287–307 (LVQFNHRMVGYLLLLVGLYVW), 321–341 (AFDWVAVILFGQMVLGIVTVL), and 344–364 (APWTWAIAHQFGAVVTICLIL). His-292 contacts heme. Position 352 (His-352) interacts with heme.

This sequence belongs to the COX15/CtaA family. Type 2 subfamily. As to quaternary structure, interacts with CtaB. Heme b is required as a cofactor.

Its subcellular location is the cell membrane. It carries out the reaction Fe(II)-heme o + 2 A + H2O = Fe(II)-heme a + 2 AH2. The protein operates within porphyrin-containing compound metabolism; heme A biosynthesis; heme A from heme O: step 1/1. In terms of biological role, catalyzes the conversion of heme O to heme A by two successive hydroxylations of the methyl group at C8. The first hydroxylation forms heme I, the second hydroxylation results in an unstable dihydroxymethyl group, which spontaneously dehydrates, resulting in the formyl group of heme A. The polypeptide is Heme A synthase (Dinoroseobacter shibae (strain DSM 16493 / NCIMB 14021 / DFL 12)).